Consider the following 424-residue polypeptide: Tyrosine--tRNA ligase (424 aa).

Y37 provides a ligand contact to L-tyrosine. The 'HIGH' region signature appears at P42–H51. Residues Y175 and Q179 each coordinate L-tyrosine. Residues K235–T239 carry the 'KMSKS' region motif. Position 238 (K238) interacts with ATP. An S4 RNA-binding domain is found at A357–G414.

This sequence belongs to the class-I aminoacyl-tRNA synthetase family. TyrS type 1 subfamily. In terms of assembly, homodimer.

The protein localises to the cytoplasm. The enzyme catalyses tRNA(Tyr) + L-tyrosine + ATP = L-tyrosyl-tRNA(Tyr) + AMP + diphosphate + H(+). In terms of biological role, catalyzes the attachment of tyrosine to tRNA(Tyr) in a two-step reaction: tyrosine is first activated by ATP to form Tyr-AMP and then transferred to the acceptor end of tRNA(Tyr). This is Tyrosine--tRNA ligase from Yersinia pestis bv. Antiqua (strain Antiqua).